A 506-amino-acid polypeptide reads, in one-letter code: ATP synthase subunit alpha (506 aa).

An ATP-binding site is contributed by G170–T177.

This sequence belongs to the ATPase alpha/beta chains family. F-type ATPases have 2 components, CF(1) - the catalytic core - and CF(0) - the membrane proton channel. CF(1) has five subunits: alpha(3), beta(3), gamma(1), delta(1), epsilon(1). CF(0) has four main subunits: a(1), b(1), b'(1) and c(9-12).

It localises to the cellular thylakoid membrane. The catalysed reaction is ATP + H2O + 4 H(+)(in) = ADP + phosphate + 5 H(+)(out). Its function is as follows. Produces ATP from ADP in the presence of a proton gradient across the membrane. The alpha chain is a regulatory subunit. The polypeptide is ATP synthase subunit alpha (Parasynechococcus marenigrum (strain WH8102)).